The following is a 318-amino-acid chain: Acetyl-coenzyme A carboxylase carboxyl transferase subunit alpha (318 aa).

A CoA carboxyltransferase C-terminal domain is found at 31–292 (DLIKEVSALE…KDAILRQLEL (262 aa)).

This sequence belongs to the AccA family. In terms of assembly, acetyl-CoA carboxylase is a heterohexamer composed of biotin carboxyl carrier protein (AccB), biotin carboxylase (AccC) and two subunits each of ACCase subunit alpha (AccA) and ACCase subunit beta (AccD).

It localises to the cytoplasm. The enzyme catalyses N(6)-carboxybiotinyl-L-lysyl-[protein] + acetyl-CoA = N(6)-biotinyl-L-lysyl-[protein] + malonyl-CoA. It functions in the pathway lipid metabolism; malonyl-CoA biosynthesis; malonyl-CoA from acetyl-CoA: step 1/1. Its function is as follows. Component of the acetyl coenzyme A carboxylase (ACC) complex. First, biotin carboxylase catalyzes the carboxylation of biotin on its carrier protein (BCCP) and then the CO(2) group is transferred by the carboxyltransferase to acetyl-CoA to form malonyl-CoA. This chain is Acetyl-coenzyme A carboxylase carboxyl transferase subunit alpha, found in Hydrogenovibrio crunogenus (strain DSM 25203 / XCL-2) (Thiomicrospira crunogena).